Consider the following 130-residue polypeptide: Ribosome-binding factor A (130 aa).

This sequence belongs to the RbfA family. Monomer. Binds 30S ribosomal subunits, but not 50S ribosomal subunits or 70S ribosomes.

The protein resides in the cytoplasm. Functionally, one of several proteins that assist in the late maturation steps of the functional core of the 30S ribosomal subunit. Associates with free 30S ribosomal subunits (but not with 30S subunits that are part of 70S ribosomes or polysomes). Required for efficient processing of 16S rRNA. May interact with the 5'-terminal helix region of 16S rRNA. The chain is Ribosome-binding factor A from Flavobacterium psychrophilum (strain ATCC 49511 / DSM 21280 / CIP 103535 / JIP02/86).